The chain runs to 259 residues: Pre-mRNA-splicing factor CWC24 (259 aa).

The tract at residues 1–67 (MFRKRLVNKS…HENEGKLQKK (67 aa)) is disordered. The span at 25 to 39 (FSEEKLVASDEEKGS) shows a compositional bias: basic and acidic residues. The residue at position 33 (S33) is a Phosphoserine. Over residues 47–57 (KSGNSRTLQLS) the composition is skewed to polar residues. The span at 58–67 (HENEGKLQKK) shows a compositional bias: basic and acidic residues. At S105 the chain carries Phosphoserine. Residues 138-166 (DFQPDVCKDYKQTGYCGYGDSCKFLHSRD) form a C3H1-type zinc finger. The RING-type zinc finger occupies 199–237 (CTLCKEDYKSPVVTNCGHYFCGSCFAKDMKKGTKCFICH).

The protein belongs to the CWC24 family. As to quaternary structure, belongs to the CWC complex (or CEF1-associated complex), a spliceosome sub-complex reminiscent of a late-stage spliceosome composed of the U2, U5 and U6 snRNAs and at least BUD13, BUD31, BRR2, CDC40, CEF1, CLF1, CUS1, CWC2, CWC15, CWC21, CWC22, CWC23, CWC24, CWC25, CWC27, ECM2, HSH155, IST3, ISY1, LEA1, MSL1, NTC20, PRP8, PRP9, PRP11, PRP19, PRP21, PRP22, PRP45, PRP46, SLU7, SMB1, SMD1, SMD2, SMD3, SMX2, SMX3, SNT309, SNU114, SPP2, SYF1, SYF2, RSE1 and YJU2.

The protein resides in the nucleus. Functionally, involved in pre-mRNA splicing. The polypeptide is Pre-mRNA-splicing factor CWC24 (CWC24) (Saccharomyces cerevisiae (strain ATCC 204508 / S288c) (Baker's yeast)).